Reading from the N-terminus, the 201-residue chain is LexA repressor 1 (201 aa).

The segment at residues 27–47 (LAEIAQAFGFASRNAAQKHVQ) is a DNA-binding region (H-T-H motif). Residues S122 and K159 each act as for autocatalytic cleavage activity in the active site.

This sequence belongs to the peptidase S24 family. Homodimer.

The catalysed reaction is Hydrolysis of Ala-|-Gly bond in repressor LexA.. In terms of biological role, represses a number of genes involved in the response to DNA damage (SOS response), including recA and lexA. In the presence of single-stranded DNA, RecA interacts with LexA causing an autocatalytic cleavage which disrupts the DNA-binding part of LexA, leading to derepression of the SOS regulon and eventually DNA repair. The protein is LexA repressor 1 of Xanthomonas campestris pv. campestris (strain ATCC 33913 / DSM 3586 / NCPPB 528 / LMG 568 / P 25).